The following is a 1401-amino-acid chain: DNA-directed RNA polymerase subunit beta'' (1401 aa).

Zn(2+) is bound by residues Cys224, Cys295, Cys302, and Cys305.

This sequence belongs to the RNA polymerase beta' chain family. RpoC2 subfamily. As to quaternary structure, in plastids the minimal PEP RNA polymerase catalytic core is composed of four subunits: alpha, beta, beta', and beta''. When a (nuclear-encoded) sigma factor is associated with the core the holoenzyme is formed, which can initiate transcription. Requires Zn(2+) as cofactor.

The protein localises to the plastid. It is found in the chloroplast. The enzyme catalyses RNA(n) + a ribonucleoside 5'-triphosphate = RNA(n+1) + diphosphate. DNA-dependent RNA polymerase catalyzes the transcription of DNA into RNA using the four ribonucleoside triphosphates as substrates. This chain is DNA-directed RNA polymerase subunit beta'', found in Ipomoea purpurea (Common morning glory).